The primary structure comprises 223 residues: Cytidine deaminase 3 (223 aa).

2 consecutive CMP/dCMP-type deaminase domains span residues 21–154 (TEPM…FSPD) and 184–223 (SDCS…WYRG). 62 to 64 (NVE) is a substrate binding site. Position 75 (His75) interacts with Zn(2+). Glu77 (proton donor) is an active-site residue. Positions 110 and 113 each coordinate Zn(2+).

The protein belongs to the cytidine and deoxycytidylate deaminase family. In terms of assembly, homodimer. It depends on Zn(2+) as a cofactor.

The catalysed reaction is cytidine + H2O + H(+) = uridine + NH4(+). The enzyme catalyses 2'-deoxycytidine + H2O + H(+) = 2'-deoxyuridine + NH4(+). In terms of biological role, this enzyme scavenges exogenous and endogenous cytidine and 2'-deoxycytidine for UMP synthesis. This is Cytidine deaminase 3 (CDA3) from Arabidopsis thaliana (Mouse-ear cress).